A 127-amino-acid chain; its full sequence is Small ribosomal subunit protein uS11 (127 aa).

This sequence belongs to the universal ribosomal protein uS11 family. As to quaternary structure, part of the 30S ribosomal subunit. Interacts with proteins S7 and S18. Binds to IF-3.

Functionally, located on the platform of the 30S subunit, it bridges several disparate RNA helices of the 16S rRNA. Forms part of the Shine-Dalgarno cleft in the 70S ribosome. This chain is Small ribosomal subunit protein uS11, found in Streptococcus pyogenes serotype M49 (strain NZ131).